The primary structure comprises 165 residues: Xanthine-guanine phosphoribosyltransferase (165 aa).

5-phospho-alpha-D-ribose 1-diphosphate is bound by residues 41–42 and 98–106; these read RG and DDLTDTGKT. Residue Asp-99 participates in Mg(2+) binding. Guanine contacts are provided by Asp-102 and Ile-145. Xanthine contacts are provided by Asp-102 and Ile-145. GMP is bound by residues 102-106 and 144-145; these read DTGKT and WI.

This sequence belongs to the purine/pyrimidine phosphoribosyltransferase family. XGPT subfamily. Homotetramer. Mg(2+) is required as a cofactor.

It localises to the cell inner membrane. The enzyme catalyses GMP + diphosphate = guanine + 5-phospho-alpha-D-ribose 1-diphosphate. The catalysed reaction is XMP + diphosphate = xanthine + 5-phospho-alpha-D-ribose 1-diphosphate. It carries out the reaction IMP + diphosphate = hypoxanthine + 5-phospho-alpha-D-ribose 1-diphosphate. It functions in the pathway purine metabolism; GMP biosynthesis via salvage pathway; GMP from guanine: step 1/1. The protein operates within purine metabolism; XMP biosynthesis via salvage pathway; XMP from xanthine: step 1/1. In terms of biological role, purine salvage pathway enzyme that catalyzes the transfer of the ribosyl-5-phosphate group from 5-phospho-alpha-D-ribose 1-diphosphate (PRPP) to the N9 position of the 6-oxopurines guanine and xanthine to form the corresponding ribonucleotides GMP (guanosine 5'-monophosphate) and XMP (xanthosine 5'-monophosphate), with the release of PPi. To a lesser extent, also acts on hypoxanthine. This chain is Xanthine-guanine phosphoribosyltransferase, found in Brucella suis (strain ATCC 23445 / NCTC 10510).